The primary structure comprises 238 residues: MEIENEQICTCIAQILHLLNSLIITFSDDDKTETGQSFVYIDGFLVKKHNNQHTIVNFETYKNKMKVSDRRKFEKANFDEFESALNNKNDLVHCPSITLFESIPTEVRSFYEDEKSGLIKVVKFRTGAMDRKRSFEKIVISVMVGKNVQKFLTFVEDEPDFQGGPIPSKYLIPKKINLMVYTLFQVHTLKFNRKDYDTLSLFYLNRGYYNELSFPCPGTLSRNSECQAERQLYDAYFH.

Belongs to the helicase family. Yeast subtelomeric Y' repeat subfamily.

This is an uncharacterized protein from Saccharomyces cerevisiae (strain ATCC 204508 / S288c) (Baker's yeast).